The primary structure comprises 274 residues: Kit ligand (274 aa).

The N-terminal stretch at 1–25 (MKKTQTWIITCIYLQLLLFNPLVRT) is a signal peptide. Position 26 is a pyrrolidone carboxylic acid (Gln-26). Over 26–215 (QGICRNRVTD…SDSIEDSSLQ (190 aa)) the chain is Extracellular. Cystine bridges form between Cys-29-Cys-114 and Cys-68-Cys-164. N-linked (GlcNAc...) asparagine glycosylation is found at Asn-90, Asn-97, Asn-145, and Asn-196. The chain crosses the membrane as a helical span at residues 216–238 (WAAVALPAFFSLVIGFAFGALYW). Topologically, residues 239–274 (KKKQPNLTRTVENIQINEEDNEISMLQEKEREFQEV) are cytoplasmic.

The protein belongs to the SCF family. Homodimer, non-covalently linked. Heterotetramer with KIT, binding two KIT molecules; thereby mediates KIT dimerization and subsequent activation by autophosphorylation. Post-translationally, a soluble form is produced by proteolytic processing of the extracellular domain.

It is found in the cytoplasm. It localises to the cytoskeleton. The protein localises to the cell membrane. The protein resides in the cell projection. Its subcellular location is the lamellipodium. It is found in the filopodium. It localises to the secreted. In terms of biological role, ligand for the receptor-type protein-tyrosine kinase KIT. Plays an essential role in the regulation of cell survival and proliferation, hematopoiesis, stem cell maintenance, gametogenesis, mast cell development, migration and function, and in melanogenesis. KITLG/SCF binding can activate several signaling pathways. Promotes phosphorylation of PIK3R1, the regulatory subunit of phosphatidylinositol 3-kinase, and subsequent activation of the kinase AKT1. KITLG/SCF and KIT also transmit signals via GRB2 and activation of RAS, RAF1 and the MAP kinases MAPK1/ERK2 and/or MAPK3/ERK1. KITLG/SCF and KIT promote activation of STAT family members STAT1, STAT3 and STAT5. KITLG/SCF and KIT promote activation of PLCG1, leading to the production of the cellular signaling molecules diacylglycerol and inositol 1,4,5-trisphosphate. KITLG/SCF acts synergistically with other cytokines, probably interleukins. The protein is Kit ligand (KITLG) of Sus scrofa (Pig).